Reading from the N-terminus, the 298-residue chain is Tyrosine recombinase XerC (298 aa).

A Core-binding (CB) domain is found at T2–V88. The region spanning H109 to D288 is the Tyr recombinase domain. Residues R148, K172, H240, R243, and H266 contribute to the active site. Y275 (O-(3'-phospho-DNA)-tyrosine intermediate) is an active-site residue.

It belongs to the 'phage' integrase family. XerC subfamily. As to quaternary structure, forms a cyclic heterotetrameric complex composed of two molecules of XerC and two molecules of XerD, in which XerC interacts with XerD via its C-terminal region, XerD interacts with XerC via its C-terminal region and so on.

It is found in the cytoplasm. Its activity is regulated as follows. FtsK may regulate the catalytic switch between XerC and XerD in the heterotetrameric complex during the two steps of the recombination process. Its function is as follows. Site-specific tyrosine recombinase, which acts by catalyzing the cutting and rejoining of the recombining DNA molecules. Binds cooperatively to specific DNA consensus sequences that are separated from XerD binding sites by a short central region, forming the heterotetrameric XerC-XerD complex that recombines DNA substrates. The complex is essential to convert dimers of the bacterial chromosome into monomers to permit their segregation at cell division. It also contributes to the segregational stability of plasmids. In the complex XerC specifically exchanges the top DNA strands. In Escherichia coli O127:H6 (strain E2348/69 / EPEC), this protein is Tyrosine recombinase XerC.